A 478-amino-acid polypeptide reads, in one-letter code: Cysteine--tRNA ligase (478 aa).

Zn(2+) is bound at residue Cys29. Positions Pro31 to Asn41 match the 'HIGH' region motif. Residues Cys216, His241, and Glu245 each contribute to the Zn(2+) site. Residues Lys274 to Ser278 carry the 'KMSKS' region motif. Lys277 is a binding site for ATP.

The protein belongs to the class-I aminoacyl-tRNA synthetase family. In terms of assembly, monomer. Zn(2+) is required as a cofactor.

The protein resides in the cytoplasm. The enzyme catalyses tRNA(Cys) + L-cysteine + ATP = L-cysteinyl-tRNA(Cys) + AMP + diphosphate. The sequence is that of Cysteine--tRNA ligase from Orientia tsutsugamushi (strain Ikeda) (Rickettsia tsutsugamushi).